The sequence spans 654 residues: Macrolide export ATP-binding/permease protein MacB (654 aa).

One can recognise an ABC transporter domain in the interval 6 to 244 (IEISALNRIF…TSASSATDAA (239 aa)). Residue 42 to 49 (GTSGSGKS) participates in ATP binding. 4 consecutive transmembrane segments (helical) span residues 279 to 299 (LLTMLGIIIGITAVVSIVAIG), 534 to 554 (IAVISLIVGGIGVMNIMLVSV), 584 to 604 (MVCLIGGGIGILLSFGVGALF), and 617 to 637 (VTAIVSAVVCSSLIGVLFGFL).

The protein belongs to the ABC transporter superfamily. Macrolide exporter (TC 3.A.1.122) family. In terms of assembly, homodimer. Part of the tripartite efflux system MacAB-TolC, which is composed of an inner membrane transporter, MacB, a periplasmic membrane fusion protein, MacA, and an outer membrane component, TolC. The complex forms a large protein conduit and can translocate molecules across both the inner and outer membranes. Interacts with MacA.

It is found in the cell inner membrane. Its function is as follows. Part of the tripartite efflux system MacAB-TolC. MacB is a non-canonical ABC transporter that contains transmembrane domains (TMD), which form a pore in the inner membrane, and an ATP-binding domain (NBD), which is responsible for energy generation. Confers resistance against macrolides. This is Macrolide export ATP-binding/permease protein MacB from Hahella chejuensis (strain KCTC 2396).